Reading from the N-terminus, the 939-residue chain is UvrABC system protein A (939 aa).

Position 32 to 39 (32 to 39 (GLSGSGKS)) interacts with ATP. A C4-type zinc finger spans residues 252–279 (CPDCGISIGEISPSMFSFNAPFGKCDVC). 2 ABC transporter domains span residues 309–588 (WGEG…KESI) and 608–936 (AGKN…QYLK). 640–647 (GVSGSGKS) lines the ATP pocket. The C4-type zinc-finger motif lies at 739–765 (CEACKGDGIVRIEMQFLSDVYVPCDVC).

Belongs to the ABC transporter superfamily. UvrA family. In terms of assembly, forms a heterotetramer with UvrB during the search for lesions.

Its subcellular location is the cytoplasm. In terms of biological role, the UvrABC repair system catalyzes the recognition and processing of DNA lesions. UvrA is an ATPase and a DNA-binding protein. A damage recognition complex composed of 2 UvrA and 2 UvrB subunits scans DNA for abnormalities. When the presence of a lesion has been verified by UvrB, the UvrA molecules dissociate. This is UvrABC system protein A from Clostridium acetobutylicum (strain ATCC 824 / DSM 792 / JCM 1419 / IAM 19013 / LMG 5710 / NBRC 13948 / NRRL B-527 / VKM B-1787 / 2291 / W).